We begin with the raw amino-acid sequence, 341 residues long: Alpha-1,4-N-acetylglucosaminyltransferase (341 aa).

Residues methionine 1–glutamate 4 are Cytoplasmic-facing. A helical; Signal-anchor for type II membrane protein membrane pass occupies residues isoleucine 5–methionine 25. Residues arginine 26–arginine 341 lie on the Lumenal side of the membrane. Asparagine 100 carries an N-linked (GlcNAc...) asparagine glycan. The DXD motif motif lies at aspartate 168–aspartate 170.

The protein belongs to the glycosyltransferase 32 family.

The protein localises to the golgi apparatus membrane. Its pathway is protein modification; protein glycosylation. Catalyzes the transfer of N-acetylglucosamine (GlcNAc) to core 2 branched O-glycans. Necessary for the synthesis of type III mucin which is specifically produced in the stomach, duodenum, and pancreatic duct. May protect against inflammation-associated gastric adenocarcinoma. The polypeptide is Alpha-1,4-N-acetylglucosaminyltransferase (Mus musculus (Mouse)).